The following is a 648-amino-acid chain: p-hydroxybenzoic acid efflux pump subunit AaeB (648 aa).

The next 11 helical transmembrane spans lie at 11-31 (FACKLTLASVLSLLLGFYFGL), 41-61 (AALVAAAPAFAAGGEPFSGAI), 65-87 (GWLRIIGTVLGSLCALLLMMLLI), 91-110 (LLMILLCCLWAGVCTWLSSL), 125-145 (TALIIVVSCLGEPQFILQLAL), 150-170 (EIVLGIVCAVLVDTLLAPRSV), 369-389 (LFWLWSGWSAGSGCMIMIAVV), 406-426 (FLMGSLVALPVGALYYTLILP), 430-450 (QSLVLLCLSLGALTFICGMAV), 458-478 (MGTLASTLNILALSNPMGFPI), and 481-501 (FVDSAIGQMVGCLLALVVLLV).

The protein belongs to the aromatic acid exporter ArAE (TC 2.A.85) family.

It is found in the cell inner membrane. In terms of biological role, forms an efflux pump with AaeA. Could function as a metabolic relief valve, allowing to eliminate certain compounds when they accumulate to high levels in the cell. The sequence is that of p-hydroxybenzoic acid efflux pump subunit AaeB from Edwardsiella ictaluri (strain 93-146).